The following is a 350-amino-acid chain: Alcohol dehydrogenase 1 (350 aa).

Residues Cys-46, His-69, Cys-100, Cys-103, Cys-106, Cys-114, and Cys-156 each contribute to the Zn(2+) site. Residues 180 to 186, Asp-204, Lys-209, 271 to 273, and Arg-343 contribute to the NAD(+) site; these read GAAGGLG and VGL.

Belongs to the zinc-containing alcohol dehydrogenase family. Homotetramer. Requires Zn(2+) as cofactor.

It localises to the cytoplasm. It catalyses the reaction a primary alcohol + NAD(+) = an aldehyde + NADH + H(+). The enzyme catalyses a secondary alcohol + NAD(+) = a ketone + NADH + H(+). In Kluyveromyces lactis (strain ATCC 8585 / CBS 2359 / DSM 70799 / NBRC 1267 / NRRL Y-1140 / WM37) (Yeast), this protein is Alcohol dehydrogenase 1 (ADH1).